The following is a 281-amino-acid chain: ATP synthase subunit a (281 aa).

6 helical membrane passes run 50-70 (FSFTNSSLFMLLTLSLVLLLV), 116-136 (FFPCILVTFTFLLFCNLQGMI), 145-165 (HFLITLGLSFSIFIGITIVGF), 172-192 (FLSFLLPAGVPLPLAPFLVLL), 219-239 (VKILSGFAWTMLCMNDLFYFI), and 246-266 (FIVLALTGLELGVAILQAYVF).

This sequence belongs to the ATPase A chain family. In terms of assembly, F-type ATPases have 2 components, CF(1) - the catalytic core - and CF(0) - the membrane proton channel. CF(1) has five subunits: alpha(3), beta(3), gamma(1), delta(1), epsilon(1). CF(0) has three main subunits: a, b and c.

The protein resides in the mitochondrion inner membrane. Mitochondrial membrane ATP synthase (F(1)F(0) ATP synthase or Complex V) produces ATP from ADP in the presence of a proton gradient across the membrane which is generated by electron transport complexes of the respiratory chain. F-type ATPases consist of two structural domains, F(1) - containing the extramembraneous catalytic core and F(0) - containing the membrane proton channel, linked together by a central stalk and a peripheral stalk. During catalysis, ATP synthesis in the catalytic domain of F(1) is coupled via a rotary mechanism of the central stalk subunits to proton translocation. Key component of the proton channel; it may play a direct role in the translocation of protons across the membrane. The sequence is that of ATP synthase subunit a (ATP6) from Oenothera berteroana (Bertero's evening primrose).